The sequence spans 340 residues: Glycerol-3-phosphate dehydrogenase [NAD(P)+] (340 aa).

The NADPH site is built by Ser13, Trp14, and Lys108. Sn-glycerol 3-phosphate is bound by residues Lys108, Gly139, and Ser141. Ala143 contributes to the NADPH binding site. Sn-glycerol 3-phosphate is bound by residues Lys194, Asp247, Ser257, Arg258, and Asn259. Residue Lys194 is the Proton acceptor of the active site. NADPH is bound at residue Arg258. NADPH contacts are provided by Val282 and Glu284.

Belongs to the NAD-dependent glycerol-3-phosphate dehydrogenase family.

It is found in the cytoplasm. It catalyses the reaction sn-glycerol 3-phosphate + NAD(+) = dihydroxyacetone phosphate + NADH + H(+). It carries out the reaction sn-glycerol 3-phosphate + NADP(+) = dihydroxyacetone phosphate + NADPH + H(+). It participates in membrane lipid metabolism; glycerophospholipid metabolism. Functionally, catalyzes the reduction of the glycolytic intermediate dihydroxyacetone phosphate (DHAP) to sn-glycerol 3-phosphate (G3P), the key precursor for phospholipid synthesis. The sequence is that of Glycerol-3-phosphate dehydrogenase [NAD(P)+] from Streptococcus sanguinis (strain SK36).